Consider the following 180-residue polypeptide: Probable Brix domain-containing ribosomal biogenesis protein (180 aa).

The Brix domain maps to 1–178; that stretch reads MTTSRRPSPR…KPAEMVKRGR (178 aa).

Its function is as follows. Probably involved in the biogenesis of the ribosome. In Aeropyrum pernix (strain ATCC 700893 / DSM 11879 / JCM 9820 / NBRC 100138 / K1), this protein is Probable Brix domain-containing ribosomal biogenesis protein.